Here is a 313-residue protein sequence, read N- to C-terminus: Putative phosphoribosylaminoimidazole-succinocarboxamide synthase 2 (313 aa).

The protein belongs to the SAICAR synthetase family.

It carries out the reaction 5-amino-1-(5-phospho-D-ribosyl)imidazole-4-carboxylate + L-aspartate + ATP = (2S)-2-[5-amino-1-(5-phospho-beta-D-ribosyl)imidazole-4-carboxamido]succinate + ADP + phosphate + 2 H(+). It participates in purine metabolism; IMP biosynthesis via de novo pathway; 5-amino-1-(5-phospho-D-ribosyl)imidazole-4-carboxamide from 5-amino-1-(5-phospho-D-ribosyl)imidazole-4-carboxylate: step 1/2. The chain is Putative phosphoribosylaminoimidazole-succinocarboxamide synthase 2 (purC2) from Mesorhizobium japonicum (strain LMG 29417 / CECT 9101 / MAFF 303099) (Mesorhizobium loti (strain MAFF 303099)).